A 156-amino-acid chain; its full sequence is ATP synthase subunit b (156 aa).

Residues 12–32 traverse the membrane as a helical segment; it reads VAFFIFVIFCMKFVWPPVIAA.

The protein belongs to the ATPase B chain family. F-type ATPases have 2 components, F(1) - the catalytic core - and F(0) - the membrane proton channel. F(1) has five subunits: alpha(3), beta(3), gamma(1), delta(1), epsilon(1). F(0) has three main subunits: a(1), b(2) and c(10-14). The alpha and beta chains form an alternating ring which encloses part of the gamma chain. F(1) is attached to F(0) by a central stalk formed by the gamma and epsilon chains, while a peripheral stalk is formed by the delta and b chains.

It localises to the cell inner membrane. Its function is as follows. F(1)F(0) ATP synthase produces ATP from ADP in the presence of a proton or sodium gradient. F-type ATPases consist of two structural domains, F(1) containing the extramembraneous catalytic core and F(0) containing the membrane proton channel, linked together by a central stalk and a peripheral stalk. During catalysis, ATP synthesis in the catalytic domain of F(1) is coupled via a rotary mechanism of the central stalk subunits to proton translocation. Functionally, component of the F(0) channel, it forms part of the peripheral stalk, linking F(1) to F(0). In Pseudomonas savastanoi pv. phaseolicola (strain 1448A / Race 6) (Pseudomonas syringae pv. phaseolicola (strain 1448A / Race 6)), this protein is ATP synthase subunit b.